The chain runs to 379 residues: tRNA-specific 2-thiouridylase MnmA (379 aa).

Residues 23–30 and Leu49 contribute to the ATP site; that span reads AMSGGVDS. Residue Cys117 is the Nucleophile of the active site. The cysteines at positions 117 and 214 are disulfide-linked. Residue Gly141 participates in ATP binding. The segment at 163–165 is interaction with tRNA; that stretch reads RDQ. The Cysteine persulfide intermediate role is filled by Cys214.

It belongs to the MnmA/TRMU family.

The protein localises to the cytoplasm. The catalysed reaction is S-sulfanyl-L-cysteinyl-[protein] + uridine(34) in tRNA + AH2 + ATP = 2-thiouridine(34) in tRNA + L-cysteinyl-[protein] + A + AMP + diphosphate + H(+). Its function is as follows. Catalyzes the 2-thiolation of uridine at the wobble position (U34) of tRNA, leading to the formation of s(2)U34. This is tRNA-specific 2-thiouridylase MnmA from Cereibacter sphaeroides (strain KD131 / KCTC 12085) (Rhodobacter sphaeroides).